We begin with the raw amino-acid sequence, 105 residues long: MTTVSSDRIRIKLKAYDYRILDKAVAEIVDTARNTGAGVAGPIPLPTNIHKYTIQRSVHVDKKSREQFEMRIHKRLMDILEPTQQTVDALGKLSLPAGVDVEIKL.

Belongs to the universal ribosomal protein uS10 family. As to quaternary structure, part of the 30S ribosomal subunit.

Its function is as follows. Involved in the binding of tRNA to the ribosomes. The polypeptide is Small ribosomal subunit protein uS10 (Desulfovibrio desulfuricans (strain ATCC 27774 / DSM 6949 / MB)).